The sequence spans 228 residues: Urease accessory protein UreE (228 aa).

The interval 188-228 is disordered; that stretch reads PLDEPHGSGLHIHAIHSHGDGHSHDHDHSHSHGDHDHDHKH. The span at 204–228 shows a compositional bias: basic and acidic residues; that stretch reads SHGDGHSHDHDHSHSHGDHDHDHKH.

The protein belongs to the UreE family.

The protein localises to the cytoplasm. Its function is as follows. Involved in urease metallocenter assembly. Binds nickel. Probably functions as a nickel donor during metallocenter assembly. The sequence is that of Urease accessory protein UreE from Yersinia kristensenii.